The chain runs to 187 residues: Ribosome-recycling factor (187 aa).

The protein belongs to the RRF family.

It localises to the cytoplasm. In terms of biological role, responsible for the release of ribosomes from messenger RNA at the termination of protein biosynthesis. May increase the efficiency of translation by recycling ribosomes from one round of translation to another. The protein is Ribosome-recycling factor of Ruegeria pomeroyi (strain ATCC 700808 / DSM 15171 / DSS-3) (Silicibacter pomeroyi).